Here is a 420-residue protein sequence, read N- to C-terminus: Probable 3-isopropylmalate dehydratase large subunit (420 aa).

[4Fe-4S] cluster-binding residues include C301, C361, and C364.

It belongs to the aconitase/IPM isomerase family. LeuC type 2 subfamily. As to quaternary structure, heterodimer of LeuC and LeuD. It depends on [4Fe-4S] cluster as a cofactor.

The catalysed reaction is (2R,3S)-3-isopropylmalate = (2S)-2-isopropylmalate. Its pathway is amino-acid biosynthesis; L-leucine biosynthesis; L-leucine from 3-methyl-2-oxobutanoate: step 2/4. In terms of biological role, catalyzes the isomerization between 2-isopropylmalate and 3-isopropylmalate, via the formation of 2-isopropylmaleate. In Methanosarcina mazei (strain ATCC BAA-159 / DSM 3647 / Goe1 / Go1 / JCM 11833 / OCM 88) (Methanosarcina frisia), this protein is Probable 3-isopropylmalate dehydratase large subunit.